Here is a 348-residue protein sequence, read N- to C-terminus: LIM domain-containing protein unc-97 (348 aa).

5 consecutive LIM zinc-binding domains span residues 21–73 (CVRC…CEHD), 82–132 (CGKC…CREC), 146–196 (CHKC…CLRC), 205–255 (CGAC…CEQH), and 264–315 (CFKC…CKRC).

In terms of assembly, interacts with unc-98. Component of an integrin containing attachment complex, composed of at least pat-2, pat-3, pat-4, pat-6, unc-52, unc-97 and unc-112. Restricted to tissue types that attach to the hypodermis, specifically body wall muscles, vulval muscles, and mechanosensory neurons.

The protein resides in the cell junction. It is found in the adherens junction. The protein localises to the nucleus. In terms of biological role, component of an integrin containing attachment complex, which is required for muscle development and maintenance. Probably function in adherens junction. Affects the structural integrity of the integrin containing muscle adherens junctions and contributes to the mechanosensory functions of touch neurons. This Caenorhabditis elegans protein is LIM domain-containing protein unc-97.